Here is a 434-residue protein sequence, read N- to C-terminus: Protein maelstrom homolog (434 aa).

A DNA-binding region (HMG box) is located at residues 4–73; the sequence is RRASRNAYYF…AQGKDSGPSE (70 aa).

This sequence belongs to the maelstrom family. Interacts with SMARCB1, SIN3B and DDX4. Interacts with piRNA-associated proteins TDRD1, PIWIL1 and PIWIL2. Interacts with Tex19.1 and, probably, Tex19.2. As to expression, testis-specific. Present in spermatocytes and round and early elongating spermatids.

It is found in the cytoplasm. It localises to the nucleus. Functionally, plays a central role during spermatogenesis by repressing transposable elements and preventing their mobilization, which is essential for the germline integrity. Acts via the piRNA metabolic process, which mediates the repression of transposable elements during meiosis by forming complexes composed of piRNAs and Piwi proteins and governs the methylation and subsequent repression of transposons. Its association with piP-bodies suggests a participation in the secondary piRNAs metabolic process. Required for the localization of germ-cell factors to the meiotic nuage. The polypeptide is Protein maelstrom homolog (Mus musculus (Mouse)).